Consider the following 694-residue polypeptide: Follicle-stimulating hormone receptor (694 aa).

Positions 1 to 17 are cleaved as a signal peptide; sequence MALLLVSLLAFLGSGAG. 2 disulfides stabilise this stretch: Cys-18/Cys-25 and Cys-23/Cys-32. One can recognise an LRRNT domain in the interval 18–46; that stretch reads CHHWLCHCSDRVFLCQDSKVTEIPPDLPR. Over 18–365 the chain is Extracellular; sequence CHHWLCHCSD…EDIMGYNILR (348 aa). LRR repeat units follow at residues 49–72, 73–97, 98–118, 119–143, 144–169, 170–192, 193–216, 217–240, and 241–259; these read IELR…FKDL, EKIE…LPKL, HEIR…AFQN, LPNL…KIQS, LQKV…MGLS, FDSL…AFNG, TQLD…VFRG, ASGP…GLEN, and LKKL…PSLD. N-linked (GlcNAc...) asparagine glycans are attached at residues Asn-191 and Asn-199. 4 disulfides stabilise this stretch: Cys-275-Cys-345, Cys-276-Cys-292, Cys-276-Cys-355, and Cys-292-Cys-337. Residues Asn-293 and Asn-311 are each glycosylated (N-linked (GlcNAc...) asparagine). Residues 366–386 form a helical membrane-spanning segment; it reads VLIWFISILAITGNITVLVIL. The Cytoplasmic segment spans residues 387–397; it reads TTSQYKLTVPR. The helical transmembrane segment at 398–420 threads the bilayer; sequence FLMCNLAFADLCIGIYLLPIASV. The Extracellular portion of the chain corresponds to 421–442; it reads DIHTKSQYHNYAIDWQTAVGCD. A disulfide bridge links Cys-441 with Cys-516. A helical transmembrane segment spans residues 443–464; it reads AAGFFTAFASELSVYTLTAIPL. Residues 465-484 are Cytoplasmic-facing; it reads ERWHTITHAMQLERKVQLRH. Residues 485–507 form a helical membrane-spanning segment; it reads AASVMVMGWVFAFAAALLPIFGV. Over 508 to 527 the chain is Extracellular; it reads SSYMKVSICLPIDIDSPLSQ. A helical membrane pass occupies residues 528 to 549; that stretch reads LYVMALLVLNVLAFVVICGCYT. The Cytoplasmic segment spans residues 550 to 572; sequence HIYLTVRNPNIVSSSSDTKIAKR. Residues 573-596 form a helical membrane-spanning segment; it reads MATLIFTDFLCMAPISLFAISASL. At 597-607 the chain is on the extracellular side; that stretch reads KAPLITVSKAK. The chain crosses the membrane as a helical span at residues 608 to 629; that stretch reads ILLVLFYPINSCANPFLYAIFT. The Cytoplasmic segment spans residues 630-694; sequence KNFRRDFFIL…LVPLSQSAHN (65 aa).

This sequence belongs to the G-protein coupled receptor 1 family. FSH/LSH/TSH subfamily. As to quaternary structure, homotrimer. Functions as a homotrimer binding the FSH hormone heterodimer composed of CGA and FSHB. Interacts with ARRB2. Interacts with APPL2; interaction is independent of follicle stimulating hormone stimulation. N-glycosylated; indirectly required for FSH-binding, possibly via a conformational change that allows high affinity binding of hormone.

Its subcellular location is the cell membrane. Functionally, g protein-coupled receptor for follitropin, the follicle-stimulating hormone. Through cAMP production activates the downstream PI3K-AKT and ERK1/ERK2 signaling pathways. This chain is Follicle-stimulating hormone receptor (FSHR), found in Mesocricetus auratus (Golden hamster).